A 145-amino-acid chain; its full sequence is Ribosome-binding factor A (145 aa).

A compositionally biased stretch (basic and acidic residues) spans 122–132 (KVQRDLESAPR). Positions 122–145 (KVQRDLESAPREDDEGEPDSSSRD) are disordered.

This sequence belongs to the RbfA family. Monomer. Binds 30S ribosomal subunits, but not 50S ribosomal subunits or 70S ribosomes.

It localises to the cytoplasm. Its function is as follows. One of several proteins that assist in the late maturation steps of the functional core of the 30S ribosomal subunit. Associates with free 30S ribosomal subunits (but not with 30S subunits that are part of 70S ribosomes or polysomes). Required for efficient processing of 16S rRNA. May interact with the 5'-terminal helix region of 16S rRNA. The chain is Ribosome-binding factor A from Methylorubrum extorquens (strain PA1) (Methylobacterium extorquens).